A 176-amino-acid polypeptide reads, in one-letter code: Ribosome maturation factor RimM (176 aa).

The PRC barrel domain occupies 95 to 169 (EDEVYLFELE…TARIAPPPGL (75 aa)).

It belongs to the RimM family. In terms of assembly, binds ribosomal protein uS19.

It localises to the cytoplasm. In terms of biological role, an accessory protein needed during the final step in the assembly of 30S ribosomal subunit, possibly for assembly of the head region. Essential for efficient processing of 16S rRNA. May be needed both before and after RbfA during the maturation of 16S rRNA. It has affinity for free ribosomal 30S subunits but not for 70S ribosomes. This Nitratidesulfovibrio vulgaris (strain ATCC 29579 / DSM 644 / CCUG 34227 / NCIMB 8303 / VKM B-1760 / Hildenborough) (Desulfovibrio vulgaris) protein is Ribosome maturation factor RimM.